Reading from the N-terminus, the 640-residue chain is F-box only protein 43 (640 aa).

Thr176 carries the phosphothreonine modification. Residue Ser275 is modified to Phosphoserine. Residues 328–354 (LQEQGQSEDEMQTVHPNSDSGVLESLQ) form a disordered region. In terms of domain architecture, F-box spans 423 to 480 (MGIEQLDILTELQYRNLKHILAMVLESLTSESLYSAWNVSRNWREIVAQDKKANRRRK). The ZBR-type zinc-finger motif lies at 568-616 (ALKPCPRCQSPAKYQPHKKRGLCSRLACGFDFCVLCLCAYHGSEDCRRG). Positions 572, 575, 590, 595, 600, 603, 608, and 613 each coordinate Zn(2+). The segment at 615–640 (RGSAKARGSKDVLPGSAQSKRNLKRL) is disordered.

Part of a SCF (SKP1-cullin-F-box) protein ligase complex. Interaction with SKP1 does not occur. Interacts with ANAPC2; the interaction is direct, ANAPC4, CDC16, CDC23; the interaction is direct, ANAPC10; the interaction is direct and CDC26, during spermatogenesis. Interacts with CDC20. Phosphorylated on Thr-176 and Ser-275 in response to calcium, which is a prerequisite for ubiquitination and proteasomal degradation. In terms of processing, ubiquitinated in response to calcium, which promotes proteasomal degradation. As to expression, present in testis and ovary (at protein level). Expression is high in immature oocytes, and diminishes after oocyte activation. Expressed post-meiotically in spermatids and sperm.

It participates in protein modification; protein ubiquitination. In terms of biological role, required to establish and maintain the arrest of oocytes at the second meiotic metaphase until fertilization. Acts by inhibiting the anaphase-promoting complex/cyclosome (APC/C) ubiquitin ligase. Probably recognizes and binds to some phosphorylated proteins and promotes their ubiquitination and degradation. Plays a vital role in modulating the ubiquitilation of CCNB1 and CDK1 during gametogenesis. The sequence is that of F-box only protein 43 (Fbxo43) from Mus musculus (Mouse).